The primary structure comprises 473 residues: DNA-binding protein (473 aa).

Disordered regions lie at residues 1–69 and 85–111; these read MAGR…GFSH and RRLE…SKAV. A compositionally biased stretch (polar residues) spans 7 to 18; it reads ELPTITPYLQET. The segment covering 53–62 has biased composition (acidic residues); sequence PDSEEEEEEV. Residue Y141 is modified to Phosphotyrosine; by host. The Zn(2+) site is built by C230 and H232. Residues 243 to 277 form a flexible loop region; it reads VEMDVASENAQRALKEHPSRAKVVQNRWGRSVVQL. C285, C301, C342, C344, C396, and C412 together coordinate Zn(2+). The tract at residues 459–473 is C-terminal arm, DBP binding; it reads VALPASHGDGEKEPF.

Belongs to the adenoviridae E2A DNA-binding protein family. As to quaternary structure, homomultimerizes on viral ssDNA bound to pTP. Forms a initiation complex with viral polymerase, pTP and hosts NFIA and POU2F1/OCT1. Interacts with host SRCAP.

It localises to the host nucleus. Functionally, plays a role in the elongation phase of viral strand displacement replication by unwinding the template in an ATP-independent fashion, employing its capacity to form multimers. Also enhances the rate of initiation. Released from template upon second strand synthesis. Assembles in complex with viral pTP, viral pol, host NFIA and host POU2F1/OCT1 on viral origin of replication. Covers the whole ssDNA genome during synthesis. The complementary strand synthesis induces its relese from DNA template. May inhibit cellular transcription mediated by the interaction between host SRCAP and CBP. This chain is DNA-binding protein, found in Homo sapiens (Human).